A 251-amino-acid chain; its full sequence is Adenosylcobinamide-GDP ribazoletransferase (251 aa).

7 consecutive transmembrane segments (helical) span residues 36-56, 60-80, 110-130, 141-161, 181-201, 202-222, and 231-251; these read LYPFIGLIIGALWYLSFFVLS, VPIMLMAALILTVPYILTGFL, VGAFSVISVVLLLLVEFAGMF, ILIFIPIASRVINGYFIVSQE, EIILLGIYVLVALITFFTLGI, NYLIAILAMGLISFILLLKVK, and DVAGYILVLMEFTGILLLGII.

It belongs to the CobS family. The cofactor is Mg(2+).

The protein resides in the cell membrane. The catalysed reaction is alpha-ribazole + adenosylcob(III)inamide-GDP = adenosylcob(III)alamin + GMP + H(+). The enzyme catalyses alpha-ribazole 5'-phosphate + adenosylcob(III)inamide-GDP = adenosylcob(III)alamin 5'-phosphate + GMP + H(+). It participates in cofactor biosynthesis; adenosylcobalamin biosynthesis; adenosylcobalamin from cob(II)yrinate a,c-diamide: step 7/7. Functionally, joins adenosylcobinamide-GDP and alpha-ribazole to generate adenosylcobalamin (Ado-cobalamin). Also synthesizes adenosylcobalamin 5'-phosphate from adenosylcobinamide-GDP and alpha-ribazole 5'-phosphate. The polypeptide is Adenosylcobinamide-GDP ribazoletransferase (Clostridium perfringens (strain ATCC 13124 / DSM 756 / JCM 1290 / NCIMB 6125 / NCTC 8237 / Type A)).